The following is a 324-amino-acid chain: PTS system glucose-specific EIICBA component (324 aa).

The 63-residue stretch at 1 to 63 (HLLNVKIGMT…KWDLATPGRE (63 aa)) folds into the PTS EIIC type-1 domain. 2 helical membrane-spanning segments follow: residues 5–25 (VKIG…GVLP) and 28–48 (TAWW…YFGF). The region spanning 78–159 (GDLPYEVLAA…QDIMQGKAPA (82 aa)) is the PTS EIIB type-1 domain. Catalysis depends on Cys-100, which acts as the Phosphocysteine intermediate; for EIIB activity. The tract at residues 156 to 177 (KAPARAEEKPKTAASEAAESET) is disordered. A compositionally biased stretch (low complexity) spans 167-177 (TAASEAAESET). Positions 194–298 (DQVFSQKMMG…SIVTPVIFTN (105 aa)) constitute a PTS EIIA type-1 domain. His-246 serves as the catalytic Tele-phosphohistidine intermediate; for EIIA activity.

It localises to the cell membrane. The catalysed reaction is N(pros)-phospho-L-histidyl-[protein] + D-glucose(out) = D-glucose 6-phosphate(in) + L-histidyl-[protein]. Its function is as follows. The phosphoenolpyruvate-dependent sugar phosphotransferase system (sugar PTS), a major carbohydrate active transport system, catalyzes the phosphorylation of incoming sugar substrates concomitantly with their translocation across the cell membrane. This system is involved in glucose transport. This chain is PTS system glucose-specific EIICBA component (ptsG), found in Geobacillus stearothermophilus (Bacillus stearothermophilus).